The chain runs to 410 residues: Multifunctional CCA protein (410 aa).

ATP contacts are provided by glycine 8 and arginine 11. The CTP site is built by glycine 8 and arginine 11. Mg(2+) is bound by residues aspartate 21 and aspartate 23. ATP is bound by residues arginine 91, arginine 138, and arginine 141. Residues arginine 91, arginine 138, and arginine 141 each coordinate CTP. An HD domain is found at 229 to 347 (TGIHQEMVSD…AQLALVCEAD (119 aa)).

This sequence belongs to the tRNA nucleotidyltransferase/poly(A) polymerase family. Bacterial CCA-adding enzyme type 1 subfamily. As to quaternary structure, monomer. Can also form homodimers and oligomers. Requires Mg(2+) as cofactor. Ni(2+) serves as cofactor.

The catalysed reaction is a tRNA precursor + 2 CTP + ATP = a tRNA with a 3' CCA end + 3 diphosphate. It catalyses the reaction a tRNA with a 3' CCA end + 2 CTP + ATP = a tRNA with a 3' CCACCA end + 3 diphosphate. Functionally, catalyzes the addition and repair of the essential 3'-terminal CCA sequence in tRNAs without using a nucleic acid template. Adds these three nucleotides in the order of C, C, and A to the tRNA nucleotide-73, using CTP and ATP as substrates and producing inorganic pyrophosphate. tRNA 3'-terminal CCA addition is required both for tRNA processing and repair. Also involved in tRNA surveillance by mediating tandem CCA addition to generate a CCACCA at the 3' terminus of unstable tRNAs. While stable tRNAs receive only 3'-terminal CCA, unstable tRNAs are marked with CCACCA and rapidly degraded. In Xanthomonas axonopodis pv. citri (strain 306), this protein is Multifunctional CCA protein.